The following is a 532-amino-acid chain: D-arabinono-1,4-lactone oxidase (532 aa).

Residues 25 to 199 (YSARPRLYFQ…VRATIRVVPA (175 aa)) enclose the FAD-binding PCMH-type domain. The residue at position 62 (His-62) is a Pros-8alpha-FAD histidine.

The protein belongs to the oxygen-dependent FAD-linked oxidoreductase family. FAD is required as a cofactor.

It is found in the mitochondrion membrane. It catalyses the reaction D-arabinono-1,4-lactone + O2 = dehydro-D-arabinono-1,4-lactone + H2O2 + H(+). Its pathway is cofactor biosynthesis; D-erythroascorbate biosynthesis; dehydro-D-arabinono-1,4-lactone from D-arabinose: step 2/2. The polypeptide is D-arabinono-1,4-lactone oxidase (ALO1) (Eremothecium gossypii (strain ATCC 10895 / CBS 109.51 / FGSC 9923 / NRRL Y-1056) (Yeast)).